A 94-amino-acid chain; its full sequence is Large ribosomal subunit protein uL23 (94 aa).

Belongs to the universal ribosomal protein uL23 family. As to quaternary structure, part of the 50S ribosomal subunit. Contacts protein L29, and trigger factor when it is bound to the ribosome.

Its function is as follows. One of the early assembly proteins it binds 23S rRNA. One of the proteins that surrounds the polypeptide exit tunnel on the outside of the ribosome. Forms the main docking site for trigger factor binding to the ribosome. This chain is Large ribosomal subunit protein uL23, found in Geobacter metallireducens (strain ATCC 53774 / DSM 7210 / GS-15).